A 379-amino-acid chain; its full sequence is UDP-4-amino-4-deoxy-L-arabinose--oxoglutarate aminotransferase (379 aa).

At Lys182 the chain carries N6-(pyridoxal phosphate)lysine.

This sequence belongs to the DegT/DnrJ/EryC1 family. ArnB subfamily. As to quaternary structure, homodimer. It depends on pyridoxal 5'-phosphate as a cofactor.

The catalysed reaction is UDP-4-amino-4-deoxy-beta-L-arabinose + 2-oxoglutarate = UDP-beta-L-threo-pentopyranos-4-ulose + L-glutamate. The protein operates within nucleotide-sugar biosynthesis; UDP-4-deoxy-4-formamido-beta-L-arabinose biosynthesis; UDP-4-deoxy-4-formamido-beta-L-arabinose from UDP-alpha-D-glucuronate: step 2/3. It functions in the pathway bacterial outer membrane biogenesis; lipopolysaccharide biosynthesis. Its function is as follows. Catalyzes the conversion of UDP-4-keto-arabinose (UDP-Ara4O) to UDP-4-amino-4-deoxy-L-arabinose (UDP-L-Ara4N). The modified arabinose is attached to lipid A and is required for resistance to polymyxin and cationic antimicrobial peptides. The polypeptide is UDP-4-amino-4-deoxy-L-arabinose--oxoglutarate aminotransferase (Salmonella paratyphi A (strain ATCC 9150 / SARB42)).